We begin with the raw amino-acid sequence, 519 residues long: MDFLQRILGILSSEDVAPALFASSISVLFLILSYQVLYPPSKYSAFPTINGTRWLALSNRRILAEFVTDAQGLMRNGLEKYDIFRIISSIGPMTILHPKYTDEIHNDRQLNFMAVLAKEMFPNYPGFDLFREGTDGSTVLQDAVKFGSSRCLGKSTQLLSDETSTLLQKLWGDEPEWHEVTAKSSVHDIIAHLSALLFYGPELCSHKEWLEVTDEYASVGFLAARQLRLWPPILRPIAQWFLPACRRLRYLASRTRGLIEPVIAARQKEKAICYSHGRQPPVYDDAIEWTERAAKGRPYDAAMSPLLFSINALHTTTDLLTQVILDLSTQPDLIVALRQEILSVKPQQNGWKNASLNQLLLMDSAIKESQRLKPTESILMRRYAMDDLTLADGNKIPKGTVLGIPIFGMRDPKIYVDPDMYDGYRFQKMRDKPGFENKCQLVSTSPWHLGFGHGIHACPGRFLAAVQVKIILCYIVAKYDFKLAGGAPPKVQSVGIELISDTEARLAVRRRQEMVIGLE.

The chain crosses the membrane as a helical span at residues 16-33 (VAPALFASSISVLFLILS). 2 N-linked (GlcNAc...) asparagine glycosylation sites follow: asparagine 50 and asparagine 353. Cysteine 458 contacts heme.

It belongs to the cytochrome P450 family. Heme is required as a cofactor.

It is found in the membrane. Its pathway is alkaloid biosynthesis; ergot alkaloid biosynthesis. In terms of biological role, cytochrome P450 monooxygenase; part of the gene cluster that mediates the biosynthesis of fumiclavanine C, a fungal ergot alkaloid. DmaW catalyzes the first step of ergot alkaloid biosynthesis by condensing dimethylallyl diphosphate (DMAP) and tryptophan to form 4-dimethylallyl-L-tryptophan. The second step is catalyzed by the methyltransferase easF that methylates 4-dimethylallyl-L-tryptophan in the presence of S-adenosyl-L-methionine, resulting in the formation of 4-dimethylallyl-L-abrine. The catalase easC and the FAD-dependent oxidoreductase easE then transform 4-dimethylallyl-L-abrine to chanoclavine-I which is further oxidized by EasD in the presence of NAD(+), resulting in the formation of chanoclavine-I aldehyde. EasA reduces chanoclavine-I aldehyde to dihydrochanoclavine-I aldehyde that spontaneously dehydrates to form 6,8-dimethyl-6,7-didehydroergoline. EasG then catalyzes the reduction of 6,8-dimethyl-6,7-didehydroergoline to form festuclavine. Hydrolysis of festuclavine by easM then leads to the formation of fumigaclavine B which is in turn acetylated by easN to fumigaclavine A. Finally, easL catalyzes the conversion of fumigaclavine A into fumigaclavine C by attaching a dimethylallyl moiety to C-2 of the indole nucleus. The chain is Cytochrome P450 monooxygenase easM from Aspergillus fumigatus (strain ATCC MYA-4609 / CBS 101355 / FGSC A1100 / Af293) (Neosartorya fumigata).